Reading from the N-terminus, the 304-residue chain is MSNVLELTIPASTANLGVGFDSIGMALDKFLHLSVKETSGTKWEYIFHDDASKQLPTDETNFIYHVAQQVASKYSVDLPNLCIEMRSDIPLARGLGSSASALVGAIYIANYFGDIQLSKHEVLQLATEIEGHPDNVAPTIYGGLIAGYYNDVSKETSVAHIDIPDVDVIVTIPTYELKTEASRRALPQKLTHSEAVKSSAISNTMICALAQHNYELAGKLMQQDGFHEPYRQHLIAEFDEVKTIASQHNAYATVISGAGPTILIFSRKENSGELVRSLNSQVVSCHSELVDINISGVKERIVYQ.

90–100 (PLARGLGSSAS) is an ATP binding site.

It belongs to the GHMP kinase family. Homoserine kinase subfamily.

The protein resides in the cytoplasm. The enzyme catalyses L-homoserine + ATP = O-phospho-L-homoserine + ADP + H(+). The protein operates within amino-acid biosynthesis; L-threonine biosynthesis; L-threonine from L-aspartate: step 4/5. Catalyzes the ATP-dependent phosphorylation of L-homoserine to L-homoserine phosphate. The chain is Homoserine kinase from Staphylococcus aureus (strain NCTC 8325 / PS 47).